Here is a 205-residue protein sequence, read N- to C-terminus: Ribosomal RNA small subunit methyltransferase G (205 aa).

Residues Gly66, Phe71, Ile119–Glu120, and Arg135 each bind S-adenosyl-L-methionine.

It belongs to the methyltransferase superfamily. RNA methyltransferase RsmG family.

Its subcellular location is the cytoplasm. The enzyme catalyses guanosine(527) in 16S rRNA + S-adenosyl-L-methionine = N(7)-methylguanosine(527) in 16S rRNA + S-adenosyl-L-homocysteine. Its function is as follows. Specifically methylates the N7 position of guanine in position 527 of 16S rRNA. The protein is Ribosomal RNA small subunit methyltransferase G of Rhizobium johnstonii (strain DSM 114642 / LMG 32736 / 3841) (Rhizobium leguminosarum bv. viciae).